We begin with the raw amino-acid sequence, 2590 residues long: DNA polymerase theta (2590 aa).

A compositionally biased stretch (basic residues) spans 1–12 (MNLLRRSGKRRR). Residues 1-33 (MNLLRRSGKRRRSESGSDSFSGSGGDSSASPQF) are disordered. Over residues 16 to 30 (GSDSFSGSGGDSSAS) the composition is skewed to low complexity. Residues Gln-96 and 115-122 (APTSAGKT) contribute to the ATP site. The 185-residue stretch at 102–286 (LGQVLEGKNL…WLNAELYHTD (185 aa)) folds into the Helicase ATP-binding domain. Residues 102–554 (LGQVLEGKNL…STSQDMHTYA (453 aa)) are helicase activity. The DEAH box signature appears at 216–219 (DELH). The region spanning 321–554 (GDEDHVVSLC…STSQDMHTYA (234 aa)) is the Helicase C-terminal domain. Residues 847-894 (DEEEEAVEERRNMRTIWVTGRKGLTEREAAALIVEEARMILQQDLVEM) form an interaction with RAD51 region. Lys-990 carries the N6-acetyllysine modification. A disordered region spans residues 1034 to 1060 (KMSRSFRSWKRRKHLKRSRDSSPLKDS). The span at 1040-1050 (RSWKRRKHLKR) shows a compositional bias: basic residues. 7 positions are modified to phosphoserine; by PLK1: Ser-1289, Ser-1482, Ser-1486, Ser-1488, Ser-1493, Ser-1555, and Ser-1563. Residues 1594–1622 (SDPVLDEHHQGDQDGGDQDERAEKSKLTG) form a disordered region. Residues 1598–1619 (LDEHHQGDQDGGDQDERAEKSK) show a composition bias toward basic and acidic residues. A phosphoserine; by PLK1 mark is found at Ser-1628 and Ser-1635. A Phosphothreonine; by PLK1 modification is found at Thr-1755. The tract at residues 1777–1797 (PSDIKNHDLSPGSRNGFKDNS) is disordered. The segment at 2097 to 2584 (AECESQKHIM…KVKIGASWGE (488 aa)) is DNA polymerase activity. 2 loop regions span residues 2142-2177 (KLPP…GRQF) and 2257-2322 (EIKM…VPFP). Residues Asp-2330 and Tyr-2331 each contribute to the Mg(2+) site. Positions 2491–2535 (QLETFHSTFKSHGHREGMLQSDQTGLSRKRKLQGMFCPIRGGFFI) are loop 3. Position 2540 (Asp-2540) interacts with Mg(2+).

The protein belongs to the DNA polymerase type-A family. In terms of assembly, homomultimer; forms homodimers and homotetramers. Interacts with RAD51. Interacts with ORC2 and ORC4. Interacts with RHNO1; interaction takes place during mitosis and promotes POLQ recruitment to DNA damage sites. Interacts (when phosphorylated) with TOPBP1 (via BRCT domains 7 and 8); promoting POLQ recruitment to DNA damage sites. Requires Mg(2+) as cofactor. Post-translationally, phosphorylated by PLK1; promoting interaction with TOPBP1 and recruitment to DNA damage sites. As to expression, highly expressed in testis.

Its subcellular location is the nucleus. It is found in the chromosome. It carries out the reaction DNA(n) + a 2'-deoxyribonucleoside 5'-triphosphate = DNA(n+1) + diphosphate. The catalysed reaction is ATP + H2O = ADP + phosphate + H(+). Specifically inhibited by the antibiotic novobiocin. The polymerase activity is specifically inhibited by the small molecule ART558. Novobiocin and ART558 confer specific killing of BRCA1/2-deficient cells and synergize with the poly [ADP-ribose] polymerase (PARP) inhibitor olaparib. Functionally, low-fidelity DNA polymerase with a helicase activity that promotes microhomology-mediated end-joining (MMEJ), an alternative non-homologous end-joining (NHEJ) machinery required to repair double-strand breaks in DNA during mitosis. MMEJ is an error-prone repair pathway that produces deletions of sequences from the strand being repaired and promotes genomic rearrangements, such as telomere fusions, some of them leading to cellular transformation. MMEJ is required during mitosis to repair persistent double-strand breaks that originate in S-phase. Although error-prone, MMEJ protects against chromosomal instability and tumorigenesis. The polymerase acts by binding directly the 2 ends of resected double-strand breaks, allowing microhomologous sequences in the overhangs to form base pairs. It then extends each strand from the base-paired region using the opposing overhang as a template. Requires partially resected DNA containing 2 to 6 base pairs of microhomology to perform MMEJ. The polymerase lacks proofreading activity and is highly promiscuous: unlike most polymerases, promotes extension of ssDNA and partial ssDNA (pssDNA) substrates. When the ends of a break do not contain terminal microhomology must identify embedded complementary sequences through a scanning step. Also acts as a DNA helicase, promoting dissociation of the replication protein A complex (RPA/RP-A), composed of RPA1, RPA2 and RPA3, from resected double-strand breaks to allow their annealing and subsequent joining by MMEJ. Removal of RPA/RP-A complex proteins prevents RAD51 accumulation at resected ends, thereby inhibiting homology-recombination repair (HR) pathway. Also shows RNA-directed DNA polymerase activity to mediate DNA repair in vitro; however this activity needs additional evidence in vivo. May also have lyase activity. Involved in somatic hypermutation of immunoglobulin genes, a process that requires the activity of DNA polymerases to ultimately introduce mutations at both A/T and C/G base pairs. POLQ-mediated end joining activity is involved in random integration of exogenous DNA hampers. The polypeptide is DNA polymerase theta (Homo sapiens (Human)).